A 336-amino-acid chain; its full sequence is Nucleoid-associated protein Spro_3255 (336 aa).

Belongs to the YejK family.

It is found in the cytoplasm. It localises to the nucleoid. The chain is Nucleoid-associated protein Spro_3255 from Serratia proteamaculans (strain 568).